Consider the following 2037-residue polypeptide: Fatty acid synthase subunit beta (2037 aa).

The segment at 1-453 is acetyltransferase; sequence MSTHRPFQLT…VYDTFDGSDF (453 aa). The active-site For acetyltransferase activity is Ser-261. Residues 465-798 are enoyl reductase; the sequence is VKLITELPVH…GSRVMTSKES (334 aa). The dehydratase stretch occupies residues 1132-1612; the sequence is GTELNWLQAF…LPNDTLQTTM (481 aa). The MaoC-like domain occupies 1506–1634; the sequence is NGKTIEESVI…KVETRNVETE (129 aa). The tract at residues 1613–1833 is malonyl/palmitoyl transferase; it reads EHVGMINGRK…MTMQVAVPRD (221 aa). Ser-1796 acts as the For malonyltransferase activity in catalysis.

It belongs to the fungal fatty acid synthetase subunit beta family. [Alpha(6)beta(6)] hexamers of two multifunctional subunits (alpha and beta).

The catalysed reaction is acetyl-CoA + n malonyl-CoA + 2n NADPH + 4n H(+) = a long-chain-acyl-CoA + n CoA + n CO2 + 2n NADP(+).. It carries out the reaction holo-[ACP] + acetyl-CoA = acetyl-[ACP] + CoA. It catalyses the reaction holo-[ACP] + malonyl-CoA = malonyl-[ACP] + CoA. The enzyme catalyses a (3R)-hydroxyacyl-[ACP] = a (2E)-enoyl-[ACP] + H2O. The catalysed reaction is a 2,3-saturated acyl-[ACP] + NAD(+) = a (2E)-enoyl-[ACP] + NADH + H(+). It carries out the reaction (9Z)-octadecenoyl-[ACP] + H2O = (9Z)-octadecenoate + holo-[ACP] + H(+). Functionally, fatty acid synthetase catalyzes the formation of long-chain fatty acids from acetyl-CoA, malonyl-CoA and NADPH. The beta subunit contains domains for: [acyl-carrier-protein] acetyltransferase and malonyltransferase, S-acyl fatty acid synthase thioesterase, enoyl-[acyl-carrier-protein] reductase, and 3-hydroxypalmitoyl-[acyl-carrier-protein] dehydratase. This is Fatty acid synthase subunit beta (FAS1) from Candida albicans (Yeast).